The chain runs to 599 residues: Elongation factor 4 (599 aa).

The 183-residue stretch at 4-186 (KFIRNFSIIA…AIIKHVPPPL (183 aa)) folds into the tr-type G domain. Residues 16–21 (DHGKST) and 133–136 (NKID) contribute to the GTP site.

This sequence belongs to the TRAFAC class translation factor GTPase superfamily. Classic translation factor GTPase family. LepA subfamily.

It is found in the cell membrane. It carries out the reaction GTP + H2O = GDP + phosphate + H(+). Required for accurate and efficient protein synthesis under certain stress conditions. May act as a fidelity factor of the translation reaction, by catalyzing a one-codon backward translocation of tRNAs on improperly translocated ribosomes. Back-translocation proceeds from a post-translocation (POST) complex to a pre-translocation (PRE) complex, thus giving elongation factor G a second chance to translocate the tRNAs correctly. Binds to ribosomes in a GTP-dependent manner. The chain is Elongation factor 4 from Ureaplasma parvum serovar 3 (strain ATCC 27815 / 27 / NCTC 11736).